The chain runs to 151 residues: Deoxyuridine 5'-triphosphate nucleotidohydrolase (151 aa).

Substrate contacts are provided by residues 70–72 (RSG), asparagine 83, 87–89 (LID), and methionine 97.

Belongs to the dUTPase family. It depends on Mg(2+) as a cofactor.

It catalyses the reaction dUTP + H2O = dUMP + diphosphate + H(+). It functions in the pathway pyrimidine metabolism; dUMP biosynthesis; dUMP from dCTP (dUTP route): step 2/2. In terms of biological role, this enzyme is involved in nucleotide metabolism: it produces dUMP, the immediate precursor of thymidine nucleotides and it decreases the intracellular concentration of dUTP so that uracil cannot be incorporated into DNA. The polypeptide is Deoxyuridine 5'-triphosphate nucleotidohydrolase (Ectopseudomonas mendocina (strain ymp) (Pseudomonas mendocina)).